Reading from the N-terminus, the 371-residue chain is MSHEKSFLVSGDNYPPPNPGYPGGPQPPMPPYAQPPYPGAPYPQPPFQPSPYGQPGYPHGPSPYPQGGYPQGPYPQGGYPQGPYPQEGYPQGPYPQGGYPQGPYPQSPFPPNPYGQPQVFPGQDPDSPQHGNYQEEGPPSYYDNQDFPATNWDDKSIRQAFIRKVFLVLTLQLSVTLSTVSVFTFVAEVKGFVRENVWTYYVSYAVFFISLIVLSCCGDFRRKHPWNLVALSVLTASLSYMVGMIASFYNTEAVIMAVGITTAVCFTVVIFSMQTRYDFTSCMGVLLVSMVVLFIFAILCIFIRNRILEIVYASLGALLFTCFLAVDTQLLLGNKQLSLSPEEYVFAALNLYTDIINIFLYILTIIGRAKE.

The segment at 1-145 (MSHEKSFLVS…EGPPSYYDNQ (145 aa)) is disordered. Residues 14-49 (YPPPNPGYPGGPQPPMPPYAQPPYPGAPYPQPPFQP) show a composition bias toward pro residues. The segment covering 84-98 (YPQEGYPQGPYPQGG) has biased composition (low complexity). The segment covering 102–114 (GPYPQSPFPPNPY) has biased composition (pro residues). 7 consecutive transmembrane segments (helical) span residues 165–185 (VFLV…VFTF), 197–217 (VWTY…LSCC), 228–248 (LVAL…IASF), 253–273 (AVIM…IFSM), 283–303 (MGVL…CIFI), 307–327 (ILEI…LAVD), and 346–366 (FAAL…LTII).

Belongs to the BI1 family. LFG subfamily.

The protein resides in the membrane. Its function is as follows. Potential apoptotic regulator. The protein is Protein lifeguard 1 (GRINA) of Homo sapiens (Human).